A 220-amino-acid polypeptide reads, in one-letter code: Octanoyltransferase (220 aa).

Positions 27–208 constitute a BPL/LPL catalytic domain; that stretch reads PGTADEIWLC…QLARAHGQAV (182 aa). Substrate-binding positions include 66 to 73, 139 to 141, and 152 to 154; these read RGGQVTYH, ALG, and GLA. The active-site Acyl-thioester intermediate is the Cys-170.

It belongs to the LipB family.

The protein resides in the cytoplasm. It carries out the reaction octanoyl-[ACP] + L-lysyl-[protein] = N(6)-octanoyl-L-lysyl-[protein] + holo-[ACP] + H(+). The protein operates within protein modification; protein lipoylation via endogenous pathway; protein N(6)-(lipoyl)lysine from octanoyl-[acyl-carrier-protein]: step 1/2. In terms of biological role, catalyzes the transfer of endogenously produced octanoic acid from octanoyl-acyl-carrier-protein onto the lipoyl domains of lipoate-dependent enzymes. Lipoyl-ACP can also act as a substrate although octanoyl-ACP is likely to be the physiological substrate. This Bordetella bronchiseptica (strain ATCC BAA-588 / NCTC 13252 / RB50) (Alcaligenes bronchisepticus) protein is Octanoyltransferase.